The chain runs to 167 residues: Bacterial non-heme ferritin-like protein (167 aa).

The region spanning 1–145 is the Ferritin-like diiron domain; that stretch reads MATAGMLLKL…TILDEVRSAK (145 aa).

The protein belongs to the ferritin family. Prokaryotic subfamily.

The protein resides in the cytoplasm. The sequence is that of Bacterial non-heme ferritin-like protein (ftnB) from Escherichia coli O157:H7.